The chain runs to 208 residues: Large ribosomal subunit protein uL4 (208 aa).

Residues 45-83 (RQGTHKSKTRAEVRGGGRKPYRQKGTGNARQGSTRSPLM) are disordered. A compositionally biased stretch (polar residues) spans 69–80 (GTGNARQGSTRS).

The protein belongs to the universal ribosomal protein uL4 family. As to quaternary structure, part of the 50S ribosomal subunit.

One of the primary rRNA binding proteins, this protein initially binds near the 5'-end of the 23S rRNA. It is important during the early stages of 50S assembly. It makes multiple contacts with different domains of the 23S rRNA in the assembled 50S subunit and ribosome. In terms of biological role, forms part of the polypeptide exit tunnel. The chain is Large ribosomal subunit protein uL4 from Chlorobium luteolum (strain DSM 273 / BCRC 81028 / 2530) (Pelodictyon luteolum).